We begin with the raw amino-acid sequence, 424 residues long: Glutamyl-tRNA(Gln) amidotransferase subunit D (424 aa).

The interval 56–78 is disordered; sequence GETANGSRNGGKGCKTNEEELPE. One can recognise an Asparaginase/glutaminase domain in the interval 84 to 413; it reads PKIAILSTGG…EKAAGMLRED (330 aa). Residues T94, T170, D171, and K247 contribute to the active site.

The protein belongs to the asparaginase 1 family. GatD subfamily. As to quaternary structure, heterodimer of GatD and GatE.

The catalysed reaction is L-glutamyl-tRNA(Gln) + L-glutamine + ATP + H2O = L-glutaminyl-tRNA(Gln) + L-glutamate + ADP + phosphate + H(+). Its function is as follows. Allows the formation of correctly charged Gln-tRNA(Gln) through the transamidation of misacylated Glu-tRNA(Gln) in organisms which lack glutaminyl-tRNA synthetase. The reaction takes place in the presence of glutamine and ATP through an activated gamma-phospho-Glu-tRNA(Gln). The GatDE system is specific for glutamate and does not act on aspartate. The polypeptide is Glutamyl-tRNA(Gln) amidotransferase subunit D (Methanosarcina acetivorans (strain ATCC 35395 / DSM 2834 / JCM 12185 / C2A)).